Consider the following 90-residue polypeptide: Large ribosomal subunit protein bL27 (90 aa).

The segment covering Met-1 to Gly-13 has biased composition (low complexity). The interval Met-1 to Arg-20 is disordered.

Belongs to the bacterial ribosomal protein bL27 family.

This Anaplasma marginale (strain Florida) protein is Large ribosomal subunit protein bL27.